The sequence spans 263 residues: Acyl-[acyl-carrier-protein]--UDP-N-acetylglucosamine O-acyltransferase (263 aa).

The protein belongs to the transferase hexapeptide repeat family. LpxA subfamily. Homotrimer.

It is found in the cytoplasm. It catalyses the reaction a (3R)-hydroxyacyl-[ACP] + UDP-N-acetyl-alpha-D-glucosamine = a UDP-3-O-[(3R)-3-hydroxyacyl]-N-acetyl-alpha-D-glucosamine + holo-[ACP]. It participates in glycolipid biosynthesis; lipid IV(A) biosynthesis; lipid IV(A) from (3R)-3-hydroxytetradecanoyl-[acyl-carrier-protein] and UDP-N-acetyl-alpha-D-glucosamine: step 1/6. Involved in the biosynthesis of lipid A, a phosphorylated glycolipid that anchors the lipopolysaccharide to the outer membrane of the cell. This Tolumonas auensis (strain DSM 9187 / NBRC 110442 / TA 4) protein is Acyl-[acyl-carrier-protein]--UDP-N-acetylglucosamine O-acyltransferase.